A 390-amino-acid polypeptide reads, in one-letter code: GDSL esterase/lipase At1g28580 (390 aa).

The first 28 residues, Met-1–Ser-28, serve as a signal peptide directing secretion. The active-site Nucleophile is Ser-44. N-linked (GlcNAc...) asparagine glycans are attached at residues Asn-140 and Asn-322. Catalysis depends on residues Asp-347 and His-350.

It belongs to the 'GDSL' lipolytic enzyme family.

It is found in the secreted. The protein is GDSL esterase/lipase At1g28580 of Arabidopsis thaliana (Mouse-ear cress).